Here is a 1419-residue protein sequence, read N- to C-terminus: L-2-aminoadipate reductase (1419 aa).

A Carrier domain is found at 880-956; that stretch reads ETLTATERDI…GLAKEIERMK (77 aa). O-(pantetheine 4'-phosphoryl)serine is present on Ser916.

The protein belongs to the ATP-dependent AMP-binding enzyme family. It depends on pantetheine 4'-phosphate as a cofactor.

The protein localises to the cytoplasm. It carries out the reaction (S)-2-amino-6-oxohexanoate + NADP(+) + H2O = L-2-aminoadipate + NADPH + 2 H(+). It catalyses the reaction (S)-2-amino-6-oxohexanoate + NAD(+) + H2O = L-2-aminoadipate + NADH + 2 H(+). The enzyme catalyses (S)-2-amino-6-oxohexanoate + AMP + diphosphate + NADP(+) = L-2-aminoadipate + ATP + NADPH + H(+). It participates in amino-acid biosynthesis; L-lysine biosynthesis via AAA pathway; L-lysine from L-alpha-aminoadipate (fungal route): step 1/3. Its function is as follows. Catalyzes the activation of alpha-aminoadipate by ATP-dependent adenylation and the reduction of activated alpha-aminoadipate by NADPH. The activated alpha-aminoadipate is bound to the phosphopantheinyl group of the enzyme itself before it is reduced to (S)-2-amino-6-oxohexanoate. The polypeptide is L-2-aminoadipate reductase (lys1) (Schizosaccharomyces pombe (strain 972 / ATCC 24843) (Fission yeast)).